We begin with the raw amino-acid sequence, 443 residues long: Dihydroorotase (443 aa).

The Zn(2+) site is built by His80 and His82. Substrate contacts are provided by residues 82 to 84 and Asn114; that span reads HFR. 3 residues coordinate Zn(2+): Asp170, His197, and His251. Substrate is bound at residue Asn297. Asp324 serves as a coordination point for Zn(2+). The active site involves Asp324. Substrate contacts are provided by residues His328 and 342–343; that span reads FG.

It belongs to the metallo-dependent hydrolases superfamily. DHOase family. Class I DHOase subfamily. Zn(2+) is required as a cofactor.

It carries out the reaction (S)-dihydroorotate + H2O = N-carbamoyl-L-aspartate + H(+). The protein operates within pyrimidine metabolism; UMP biosynthesis via de novo pathway; (S)-dihydroorotate from bicarbonate: step 3/3. Catalyzes the reversible cyclization of carbamoyl aspartate to dihydroorotate. The polypeptide is Dihydroorotase (Wolbachia sp. subsp. Brugia malayi (strain TRS)).